The following is a 511-amino-acid chain: Histidine ammonia-lyase (511 aa).

The segment at residues 142 to 144 (ASG) is a cross-link (5-imidazolinone (Ala-Gly)). Ser-143 carries the post-translational modification 2,3-didehydroalanine (Ser).

The protein belongs to the PAL/histidase family. Contains an active site 4-methylidene-imidazol-5-one (MIO), which is formed autocatalytically by cyclization and dehydration of residues Ala-Ser-Gly.

Its subcellular location is the cytoplasm. It catalyses the reaction L-histidine = trans-urocanate + NH4(+). Its pathway is amino-acid degradation; L-histidine degradation into L-glutamate; N-formimidoyl-L-glutamate from L-histidine: step 1/3. The sequence is that of Histidine ammonia-lyase (hutH) from Rhizobium meliloti (strain 1021) (Ensifer meliloti).